Reading from the N-terminus, the 402-residue chain is UDP-GlcNAc:betaGal beta-1,3-N-acetylglucosaminyltransferase 9 (402 aa).

The Cytoplasmic portion of the chain corresponds to 1–10 (MRRRLRLRRD). The helical; Signal-anchor for type II membrane protein transmembrane segment at 11 to 27 (ALLTLLLGASLGLLLYA) threads the bilayer. Residues 28 to 402 (QRDGAAPTAS…VAAGPFQWDS (375 aa)) are Lumenal-facing. The segment covering 32-47 (AAPTASAPRGRGRAAP) has biased composition (low complexity). The interval 32-83 (AAPTASAPRGRGRAAPRPTPGPRAFQLPDAGAAPPAYEGDTPAPPTPTGPFD) is disordered.

The protein belongs to the glycosyltransferase 31 family.

The protein resides in the golgi apparatus membrane. The sequence is that of UDP-GlcNAc:betaGal beta-1,3-N-acetylglucosaminyltransferase 9 from Homo sapiens (Human).